Here is an 823-residue protein sequence, read N- to C-terminus: Molybdenum cofactor sulfurase (823 aa).

Lys-228 is subject to N6-(pyridoxal phosphate)lysine. Cys-392 is a catalytic residue. The tract at residues 628–667 is disordered; sequence SSTRLAEPRRGLGSRKSPLRPAMPGAFPQDTPTPEAERNP. Positions 644-819 constitute an MOSC domain; that stretch reads SPLRPAMPGA…VMVGDVVTPS (176 aa).

This sequence belongs to the class-V pyridoxal-phosphate-dependent aminotransferase family. MOCOS subfamily. It depends on pyridoxal 5'-phosphate as a cofactor.

It catalyses the reaction Mo-molybdopterin + L-cysteine + AH2 = thio-Mo-molybdopterin + L-alanine + A + H2O. It functions in the pathway cofactor biosynthesis; molybdopterin biosynthesis. Its function is as follows. Sulfurates the molybdenum cofactor. Sulfation of molybdenum is essential for xanthine dehydrogenase (XDH) and aldehyde oxidase (ADO) enzymes in which molybdenum cofactor is liganded by 1 oxygen and 1 sulfur atom in active form. This chain is Molybdenum cofactor sulfurase, found in Aspergillus niger (strain ATCC MYA-4892 / CBS 513.88 / FGSC A1513).